The chain runs to 494 residues: Aspartyl/glutamyl-tRNA(Asn/Gln) amidotransferase subunit B (494 aa).

This sequence belongs to the GatB/GatE family. GatB subfamily. In terms of assembly, heterotrimer of A, B and C subunits.

It catalyses the reaction L-glutamyl-tRNA(Gln) + L-glutamine + ATP + H2O = L-glutaminyl-tRNA(Gln) + L-glutamate + ADP + phosphate + H(+). The catalysed reaction is L-aspartyl-tRNA(Asn) + L-glutamine + ATP + H2O = L-asparaginyl-tRNA(Asn) + L-glutamate + ADP + phosphate + 2 H(+). Its function is as follows. Allows the formation of correctly charged Asn-tRNA(Asn) or Gln-tRNA(Gln) through the transamidation of misacylated Asp-tRNA(Asn) or Glu-tRNA(Gln) in organisms which lack either or both of asparaginyl-tRNA or glutaminyl-tRNA synthetases. The reaction takes place in the presence of glutamine and ATP through an activated phospho-Asp-tRNA(Asn) or phospho-Glu-tRNA(Gln). The chain is Aspartyl/glutamyl-tRNA(Asn/Gln) amidotransferase subunit B from Synechococcus sp. (strain CC9902).